Consider the following 1082-residue polypeptide: DNA-directed RNA polymerase subunit beta (1082 aa).

It belongs to the RNA polymerase beta chain family. In plastids the minimal PEP RNA polymerase catalytic core is composed of four subunits: alpha, beta, beta', and beta''. When a (nuclear-encoded) sigma factor is associated with the core the holoenzyme is formed, which can initiate transcription.

Its subcellular location is the plastid. It localises to the chloroplast. The enzyme catalyses RNA(n) + a ribonucleoside 5'-triphosphate = RNA(n+1) + diphosphate. In terms of biological role, DNA-dependent RNA polymerase catalyzes the transcription of DNA into RNA using the four ribonucleoside triphosphates as substrates. The sequence is that of DNA-directed RNA polymerase subunit beta from Euglena gracilis.